Consider the following 444-residue polypeptide: Tubulin beta-9 chain (444 aa).

GTP is bound by residues glutamine 11, glutamate 69, serine 138, glycine 142, threonine 143, glycine 144, asparagine 204, and asparagine 226. Glutamate 69 provides a ligand contact to Mg(2+).

The protein belongs to the tubulin family. As to quaternary structure, dimer of alpha and beta chains. A typical microtubule is a hollow water-filled tube with an outer diameter of 25 nm and an inner diameter of 15 nM. Alpha-beta heterodimers associate head-to-tail to form protofilaments running lengthwise along the microtubule wall with the beta-tubulin subunit facing the microtubule plus end conferring a structural polarity. Microtubules usually have 13 protofilaments but different protofilament numbers can be found in some organisms and specialized cells. Interacts with TFCA. Requires Mg(2+) as cofactor.

It is found in the cytoplasm. The protein resides in the cytoskeleton. Tubulin is the major constituent of microtubules, a cylinder consisting of laterally associated linear protofilaments composed of alpha- and beta-tubulin heterodimers. Microtubules grow by the addition of GTP-tubulin dimers to the microtubule end, where a stabilizing cap forms. Below the cap, tubulin dimers are in GDP-bound state, owing to GTPase activity of alpha-tubulin. The chain is Tubulin beta-9 chain (TUBB9) from Arabidopsis thaliana (Mouse-ear cress).